The sequence spans 29 residues: Cyclotide psyleio D (29 aa).

Residues 1-29 (GLPVCGESCFGGTCNTPGCSCTWPVCTRD) constitute a cross-link (cyclopeptide (Gly-Asp)). 3 disulfide bridges follow: C5-C19, C9-C21, and C14-C26.

This is a cyclic peptide.

Functionally, probably participates in a plant defense mechanism. The protein is Cyclotide psyleio D of Psychotria brachyceras.